We begin with the raw amino-acid sequence, 416 residues long: YYTPKYETKDTDILAAFRMTPQPGVPPEEAGAAVAAESSTGTWTTVWTDGLTSLDRYKGRCYDIEPVAGEDNQYIAYVAYPLDLFEEGSVTNMFTSIVGNVFGFKALRALGLEDLRIPPAYSKTFIGPPHGIQVERDKLNKYGRPLLGCTIKPKLGLSAKNYGRAVYECLRGGLDSTKDDENVNSQPFMRWRDRFVSVAEALFKAQAETGEIKGHYLNATAGTCEEMMKRAAFARESGVPITMHDYLTGGFTANTSLAFYCRDNGLLLHIHRAMHAVIDRQRNHGIHFRVLAKALRMSGGDHVHAGTVVGKLEGERDVTLGFVDLLRDDYIEKDRSRGIYFTQDWVSMPGVFPVASGGIHVWHMPALTEIFGDDSVSQFGGGTLGHPGGNAPGAVANRVALEACVQARNEGRDLAR.

Asn-100 and Thr-150 together coordinate substrate. The active-site Proton acceptor is Lys-152. Residue Lys-154 participates in substrate binding. Lys-178, Asp-180, and Glu-181 together coordinate Mg(2+). Position 178 is an N6-carboxylysine (Lys-178). His-271 (proton acceptor) is an active-site residue. The substrate site is built by Arg-272, His-304, and Ser-356.

The protein belongs to the RuBisCO large chain family. Type I subfamily. Heterohexadecamer of 8 large chains and 8 small chains; disulfide-linked. The disulfide link is formed within the large subunit homodimers. The cofactor is Mg(2+). Post-translationally, the disulfide bond which can form in the large chain dimeric partners within the hexadecamer appears to be associated with oxidative stress and protein turnover.

The protein localises to the plastid. The protein resides in the chloroplast. It carries out the reaction 2 (2R)-3-phosphoglycerate + 2 H(+) = D-ribulose 1,5-bisphosphate + CO2 + H2O. The catalysed reaction is D-ribulose 1,5-bisphosphate + O2 = 2-phosphoglycolate + (2R)-3-phosphoglycerate + 2 H(+). Functionally, ruBisCO catalyzes two reactions: the carboxylation of D-ribulose 1,5-bisphosphate, the primary event in carbon dioxide fixation, as well as the oxidative fragmentation of the pentose substrate in the photorespiration process. Both reactions occur simultaneously and in competition at the same active site. The chain is Ribulose bisphosphate carboxylase large chain (rbcL) from Cheiropleuria bicuspis (Fern).